We begin with the raw amino-acid sequence, 250 residues long: MAGHSQFKNIMHRKGAQDAKRAKKFNKLAREITVSAKAGLPDPASNPRLRAAIQAARAENMPKDRIERAIKQGTPGADGANYEEVRYEGYGPGGVALIVEALTDNRNRTASEVRTAFTKFGGTLGETNSVSFMFNRIGQVVYPASVADADTVLEAAIEAGADDVQSDEGGHYISTAVDSLGEVRDALETRFGPPESAKLTWQPQNTVPVAAEDAAQSLMKLLDMLDDNDDVQTVLGNFDIPQDLLDKLNG.

Residues 1-21 (MAGHSQFKNIMHRKGAQDAKR) form a disordered region.

The protein belongs to the TACO1 family.

The protein resides in the cytoplasm. The chain is Probable transcriptional regulatory protein RC1_1808 from Rhodospirillum centenum (strain ATCC 51521 / SW).